Consider the following 130-residue polypeptide: Small ribosomal subunit protein uS8 (130 aa).

The protein belongs to the universal ribosomal protein uS8 family. As to quaternary structure, part of the 30S ribosomal subunit.

Its function is as follows. One of the primary rRNA binding proteins, it binds directly to 16S rRNA central domain where it helps coordinate assembly of the platform of the 30S subunit. This Pyrobaculum neutrophilum (strain DSM 2338 / JCM 9278 / NBRC 100436 / V24Sta) (Thermoproteus neutrophilus) protein is Small ribosomal subunit protein uS8.